A 745-amino-acid polypeptide reads, in one-letter code: Junction plakoglobin (745 aa).

Methionine 1 carries the N-acetylmethionine modification. Threonine 14 carries O-linked (GlcNAc) threonine glycosylation. Residues serine 99 and serine 125 each carry the phosphoserine modification. 12 ARM repeats span residues 132–171 (NYQD…QLSK), 172–215 (KEAS…LSHH), 216–255 (REGL…NLLL), 258–297 (EGAK…LLAY), 298–341 (GNQE…LSVC), 342–381 (PSNK…NLSD), 383–420 (ATKQ…NLTC), 423–464 (SKNK…HLTS), 470–510 (EMAQ…NLAL), 512–551 (PANH…QPYT), 574–613 (PMNR…ELAQ), and 615–661 (KEAA…PDYR). The tract at residues 132 to 297 (NYQDDAELAT…TTDCLQLLAY (166 aa)) is interaction with DSC1 and DSG1. Serine 182 carries the post-translational modification Phosphoserine. The interaction with DSC1 stretch occupies residues 574–661 (PMNRMEIFRL…ISEDKNPDYR (88 aa)). A phosphoserine mark is found at serine 665 and serine 730.

It belongs to the beta-catenin family. In terms of assembly, homodimer. Component of an E-cadherin/catenin adhesion complex composed of at least E-cadherin/CDH1 and gamma-catenin/JUP, and possibly alpha-catenin/CTNNA1; the complex is located to adherens junctions. The stable association of CTNNA1 is controversial as CTNNA1 was shown not to bind to F-actin when assembled in the complex. Interacts with MUC1. Interacts with CAV1. Interacts with PTPRJ. Interacts with DSG1. Interacts with DSC1 and DSC2. Interacts with PKP2. Interacts with PKP3 (via N-terminus); the interaction is required for PKP3 localization to desmosome cell-cell junctions. Interacts with DSG4. In terms of processing, may be phosphorylated by FER. In terms of tissue distribution, expressed in the heart (at protein level).

It is found in the cell junction. The protein localises to the adherens junction. The protein resides in the desmosome. It localises to the cytoplasm. Its subcellular location is the cytoskeleton. It is found in the cell membrane. The protein localises to the nucleus. Its function is as follows. Common junctional plaque protein. The membrane-associated plaques are architectural elements in an important strategic position to influence the arrangement and function of both the cytoskeleton and the cells within the tissue. The presence of plakoglobin in both the desmosomes and in the intermediate junctions suggests that it plays a central role in the structure and function of submembranous plaques. Acts as a substrate for VE-PTP and is required by it to stimulate VE-cadherin function in endothelial cells. Can replace beta-catenin in E-cadherin/catenin adhesion complexes which are proposed to couple cadherins to the actin cytoskeleton. In Rattus norvegicus (Rat), this protein is Junction plakoglobin.